The chain runs to 457 residues: Secreted effector kinase SteC (457 aa).

Residue K256 participates in ATP binding.

Belongs to the protein kinase superfamily. Autophosphorylated.

Its subcellular location is the secreted. It is found in the host cytoplasm. In terms of biological role, effector proteins function to alter host cell physiology and promote bacterial survival in host tissues. This protein is a kinase, which is required for SPI-2 T3SS-dependent F-actin meshwork formation in infected host cells. In Salmonella typhimurium (strain LT2 / SGSC1412 / ATCC 700720), this protein is Secreted effector kinase SteC (steC).